The chain runs to 347 residues: Dihydroorotate dehydrogenase (quinone) (347 aa).

Residues 62-66 (AGLDK) and alanine 86 contribute to the FMN site. Residue lysine 66 participates in substrate binding. 111 to 115 (NRMGF) contributes to the substrate binding site. Positions 139 and 172 each coordinate FMN. Asparagine 172 lines the substrate pocket. Serine 175 functions as the Nucleophile in the catalytic mechanism. Asparagine 177 is a substrate binding site. Residues lysine 217 and threonine 245 each coordinate FMN. 246-247 (NT) contributes to the substrate binding site. FMN contacts are provided by residues glycine 268, glycine 297, and 318-319 (YT).

The protein belongs to the dihydroorotate dehydrogenase family. Type 2 subfamily. Monomer. Requires FMN as cofactor.

It localises to the cell membrane. The enzyme catalyses (S)-dihydroorotate + a quinone = orotate + a quinol. Its pathway is pyrimidine metabolism; UMP biosynthesis via de novo pathway; orotate from (S)-dihydroorotate (quinone route): step 1/1. Functionally, catalyzes the conversion of dihydroorotate to orotate with quinone as electron acceptor. The polypeptide is Dihydroorotate dehydrogenase (quinone) (Coxiella burnetii (strain CbuK_Q154) (Coxiella burnetii (strain Q154))).